The primary structure comprises 812 residues: Toll-like receptor 10 (812 aa).

The first 19 residues, 1-19 (MRYIRSIYIFCSIVTSVRS), serve as a signal peptide directing secretion. The Extracellular portion of the chain corresponds to 20–577 (GASELPEERE…VHLPEISCNT (558 aa)). LRR repeat units follow at residues 24 to 46 (LPEE…PEGL), 49 to 70 (ITTT…DFRS), 73 to 94 (KLKV…TFEF), 97 to 118 (ELSY…SLAG), and 119 to 139 (LRHL…VETG). N33 is a glycosylation site (N-linked (GlcNAc...) asparagine). N140 is a glycosylation site (N-linked (GlcNAc...) asparagine). One copy of the LRR 6 repeat lies at 143–166 (HLETLGLSGAKIQKSDFQKIAHLQ). An N-linked (GlcNAc...) asparagine glycan is attached at N189. LRR repeat units follow at residues 296 to 321 (SNTV…ESIY), 325 to 348 (TKMD…PMYP), 350 to 373 (RFQY…IQLP), and 374 to 395 (HLKT…SHFA). Residue N331 is glycosylated (N-linked (GlcNAc...) asparagine). A glycan (N-linked (GlcNAc...) asparagine) is linked at N397. 5 LRR repeats span residues 399–420 (SLRH…NCLW), 423–443 (TLVT…GCLP), 445–467 (NIQI…THLT), 468–489 (SLRE…SHFR), and 490–510 (RLLV…DFFQ). Residue N428 is glycosylated (N-linked (GlcNAc...) asparagine). The 55-residue stretch at 523–577 (NPFRCTCELRDFIQLGKYSEGMMVGWSDSYICEYPLNLKGTQLKDVHLPEISCNT) folds into the LRRCT domain. The chain crosses the membrane as a helical span at residues 578 to 598 (GLLIVTIVVVMLVLGMAVAFC). Topologically, residues 599-812 (CLHFDLPWYL…AISLIRTDCL (214 aa)) are cytoplasmic. The 144-residue stretch at 633–776 (VQFHVFISYS…LFWANLRAAL (144 aa)) folds into the TIR domain.

Belongs to the Toll-like receptor family. In terms of assembly, binds MYD88 via their respective TIR domains.

The protein resides in the membrane. Functionally, participates in the innate immune response to microbial agents. Acts via MYD88 and TRAF6, leading to NF-kappa-B activation, cytokine secretion and the inflammatory response. The protein is Toll-like receptor 10 (TLR10) of Bos taurus (Bovine).